Consider the following 159-residue polypeptide: Ribosomal RNA large subunit methyltransferase H (159 aa).

Residues leucine 76, glycine 108, and 127–132 (FGLLTL) each bind S-adenosyl-L-methionine.

It belongs to the RNA methyltransferase RlmH family. As to quaternary structure, homodimer.

It localises to the cytoplasm. It catalyses the reaction pseudouridine(1915) in 23S rRNA + S-adenosyl-L-methionine = N(3)-methylpseudouridine(1915) in 23S rRNA + S-adenosyl-L-homocysteine + H(+). Its function is as follows. Specifically methylates the pseudouridine at position 1915 (m3Psi1915) in 23S rRNA. The sequence is that of Ribosomal RNA large subunit methyltransferase H from Streptococcus agalactiae serotype Ia (strain ATCC 27591 / A909 / CDC SS700).